Here is a 202-residue protein sequence, read N- to C-terminus: Interleukin-17D (202 aa).

Residues 1–15 (MLVAGFLLALPPSWA) form the signal peptide. The segment at 65 to 85 (QARNASCPAGGRPADRRFRPP) is disordered. N-linked (GlcNAc...) asparagine glycosylation is found at Asn68 and Asn181.

The protein belongs to the IL-17 family. Expressed preferentially in adipose, skeletal muscle and CNS.

It localises to the secreted. Functionally, induces expression of IL6, CXCL8/IL8, and CSF2/GM-CSF from endothelial cells. The protein is Interleukin-17D (IL17D) of Homo sapiens (Human).